The primary structure comprises 323 residues: Acetyl-coenzyme A carboxylase carboxyl transferase subunit alpha (323 aa).

One can recognise a CoA carboxyltransferase C-terminal domain in the interval 32 to 293 (NISEEVAKLQ…RKALAAQLES (262 aa)).

Belongs to the AccA family. Acetyl-CoA carboxylase is a heterohexamer composed of biotin carboxyl carrier protein (AccB), biotin carboxylase (AccC) and two subunits each of ACCase subunit alpha (AccA) and ACCase subunit beta (AccD).

The protein resides in the cytoplasm. It carries out the reaction N(6)-carboxybiotinyl-L-lysyl-[protein] + acetyl-CoA = N(6)-biotinyl-L-lysyl-[protein] + malonyl-CoA. Its pathway is lipid metabolism; malonyl-CoA biosynthesis; malonyl-CoA from acetyl-CoA: step 1/1. Its function is as follows. Component of the acetyl coenzyme A carboxylase (ACC) complex. First, biotin carboxylase catalyzes the carboxylation of biotin on its carrier protein (BCCP) and then the CO(2) group is transferred by the carboxyltransferase to acetyl-CoA to form malonyl-CoA. This chain is Acetyl-coenzyme A carboxylase carboxyl transferase subunit alpha, found in Alcanivorax borkumensis (strain ATCC 700651 / DSM 11573 / NCIMB 13689 / SK2).